The chain runs to 312 residues: Olfactory receptor-like protein COR2 (312 aa).

The Extracellular segment spans residues 1–26 (MASGNCTTPTTFILSGLTDNPRLQMP). A glycan (N-linked (GlcNAc...) asparagine) is linked at Asn-5. The helical transmembrane segment at 27-49 (LFMVFLVIYTTTLLTNLGLIALI) threads the bilayer. Over 50 to 57 (GMDLHLQT) the chain is Cytoplasmic. Residues 58–79 (PMYIFLQNLSFTDAAYSTVITP) form a helical membrane-spanning segment. Residues 80 to 100 (KMLATFLEERRTISYVGCILQ) are Extracellular-facing. A disulfide bond links Cys-97 and Cys-179. The helical transmembrane segment at 101–120 (YFSFVLLTTSEWLLLAVMAY) threads the bilayer. Residues 121–139 (DRYVAICKPLLYPSIMTKA) are Cytoplasmic-facing. The helical transmembrane segment at 140–164 (VCWRLVKGLYSLAFLNSLVHTSGLL) threads the bilayer. Over 165 to 205 (KLSFCSSNVVNHFFCDNRPLFQISSSSTTLNELLVIISGSL) the chain is Extracellular. The helical transmembrane segment at 206–226 (FVMSSIITILISYVFIILTVV) threads the bilayer. The Cytoplasmic portion of the chain corresponds to 227 to 239 (MIRSKDGKYKAFS). A helical transmembrane segment spans residues 240 to 260 (TCTSHLMAVSLFHGTVIFMYL). Over 261–271 (RSVKLFSLDTD) the chain is Extracellular. A helical membrane pass occupies residues 272-292 (KIASLFYTVVIPMLNPLIYSW). The Cytoplasmic portion of the chain corresponds to 293 to 312 (RNKEVKDALRRLTATSVWLH).

It belongs to the G-protein coupled receptor 1 family.

It is found in the cell membrane. Odorant receptor. This is Olfactory receptor-like protein COR2 (COR2) from Gallus gallus (Chicken).